We begin with the raw amino-acid sequence, 493 residues long: Monocarboxylate transporter 1 (493 aa).

Residues 1-22 (MPPAIGGPVGYTPPDGGWGWAV) are Cytoplasmic-facing. A helical transmembrane segment spans residues 23–44 (LVGAFISIGFSYAFPKSITVFF). Lys38 contacts (S)-lactate. Topologically, residues 45-55 (KEIEVIFSATT) are extracellular. A helical membrane pass occupies residues 56–80 (SEVSWISSIMLAVMYAGGPISSILV). Over 81 to 84 (NKYG) the chain is Cytoplasmic. The chain crosses the membrane as a helical span at residues 85–105 (SRPVMIAGGCLSGCGLIAASF). Residues 106–109 (CNTV) lie on the Extracellular side of the membrane. The helical transmembrane segment at 110–132 (QELYLCIGVIGGLGLAFNLNPAL) threads the bilayer. Residues 133-146 (TMIGKYFYKKRPLA) lie on the Cytoplasmic side of the membrane. The chain crosses the membrane as a helical span at residues 147-169 (NGLAMAGSPVFLSTLAPLNQAFF). The Extracellular portion of the chain corresponds to 170–174 (DIFDW). Residues 175–194 (RGSFLILGGLLLNCCVAGSL) traverse the membrane as a helical segment. Topologically, residues 195-254 (MRPIGPEQVKLEKLKSKESLQEAGKSDANTDLIGGSPKGEKLSVFQTINKFLDLSLFTHR) are cytoplasmic. A phosphoserine mark is found at Ser210, Ser213, and Ser220. Thr224 carries the phosphothreonine modification. The residue at position 230 (Ser230) is a Phosphoserine. Residues 255 to 281 (GFLLYLSGNVVMFFGLFTPLVFLSSYG) traverse the membrane as a helical segment. The Extracellular segment spans residues 282-288 (KSKDFSS). Residues 289–310 (EKSAFLLSILAFVDMVARPSMG) traverse the membrane as a helical segment. Asp302 is a binding site for H(+). Arg306 contributes to the (S)-lactate binding site. At 311-321 (LAANTKWIRPR) the chain is on the cytoplasmic side. A helical transmembrane segment spans residues 322-342 (IQYFFAASVVANGVCHLLAPL). At 343 to 346 (STTY) the chain is on the extracellular side. Residues 347–368 (VGFCVYAGVFGFAFGWLSSVLF) form a helical membrane-spanning segment. Residues 369 to 382 (ETLMDLIGPQRFSS) are Cytoplasmic-facing. The chain crosses the membrane as a helical span at residues 383 to 403 (AVGLVTIVECCPVLLGPPLLG). Over 404-414 (RLNDMYGDYKY) the chain is Extracellular. The chain crosses the membrane as a helical span at residues 415-436 (TYWACGVILIIAGIYLFIGMGI). At 437–493 (NYRLLAKEQKAEEKQKREGKEDEASTDVDEKPKETMKAAQSPQQHSSGDPTEEESPV) the chain is on the cytoplasmic side. Residues 447-472 (AEEKQKREGKEDEASTDVDEKPKETM) show a composition bias toward basic and acidic residues. The segment at 447-493 (AEEKQKREGKEDEASTDVDEKPKETMKAAQSPQQHSSGDPTEEESPV) is disordered. Residue Ser461 is modified to Phosphoserine. The residue at position 462 (Thr462) is a Phosphothreonine. The segment covering 474-485 (AAQSPQQHSSGD) has biased composition (polar residues). A phosphoserine mark is found at Ser477, Ser482, Ser483, and Ser491.

This sequence belongs to the major facilitator superfamily. Monocarboxylate porter (TC 2.A.1.13) family. Interacts with isoform 2 of BSG; interaction mediates SLC16A1 targeting to the plasma membrane. Interacts with EMB; interaction mediates SLC16A1 targeting to the plasma membrane. As to expression, detected in liver, brain, spinal cord, spermatozoa, muscle, white adipose tissue and brown adipose tissue (at protein level). Widely expressed, except in pancreas, where expression is not detectable.

Its subcellular location is the cell membrane. It localises to the basolateral cell membrane. The protein resides in the apical cell membrane. It carries out the reaction (S)-lactate(in) + H(+)(in) = (S)-lactate(out) + H(+)(out). It catalyses the reaction acetate(out) + H(+)(out) = acetate(in) + H(+)(in). The enzyme catalyses acetoacetate(out) + H(+)(out) = acetoacetate(in) + H(+)(in). The catalysed reaction is pyruvate(out) + H(+)(out) = pyruvate(in) + H(+)(in). It carries out the reaction (R)-3-hydroxybutanoate(out) + H(+)(out) = (R)-3-hydroxybutanoate(in) + H(+)(in). It catalyses the reaction 3-methyl-2-oxobutanoate(out) + H(+)(out) = 3-methyl-2-oxobutanoate(in) + H(+)(in). The enzyme catalyses 4-methyl-2-oxopentanoate(out) + H(+)(out) = 4-methyl-2-oxopentanoate(in) + H(+)(in). The catalysed reaction is succinate(in) + 2 H(+)(in) = succinate(out) + 2 H(+)(out). Functionally, bidirectional proton-coupled monocarboxylate transporter. Catalyzes the rapid transport across the plasma membrane of many monocarboxylates such as lactate, pyruvate, acetate and the ketone bodies acetoacetate and beta-hydroxybutyrate, and thus contributes to the maintenance of intracellular pH. The transport direction is determined by the proton motive force and the concentration gradient of the substrate monocarboxylate. MCT1 is a major lactate exporter. Plays a role in cellular responses to a high-fat diet by modulating the cellular levels of lactate and pyruvate that contribute to the regulation of central metabolic pathways and insulin secretion, with concomitant effects on plasma insulin levels and blood glucose homeostasis. Facilitates the protonated monocarboxylate form of succinate export, that its transient protonation upon muscle cell acidification in exercising muscle and ischemic heart. Functions via alternate outward- and inward-open conformation states. Protonation and deprotonation of 302-Asp is essential for the conformational transition. This Mus musculus (Mouse) protein is Monocarboxylate transporter 1 (Slc16a1).